The following is a 541-amino-acid chain: Chaperonin GroEL (541 aa).

ATP is bound by residues 29-32, 86-90, glycine 413, 476-478, and aspartate 492; these read TLGP, DGTTT, and NAA.

The protein belongs to the chaperonin (HSP60) family. Forms a cylinder of 14 subunits composed of two heptameric rings stacked back-to-back. Interacts with the co-chaperonin GroES.

Its subcellular location is the cytoplasm. It carries out the reaction ATP + H2O + a folded polypeptide = ADP + phosphate + an unfolded polypeptide.. Functionally, together with its co-chaperonin GroES, plays an essential role in assisting protein folding. The GroEL-GroES system forms a nano-cage that allows encapsulation of the non-native substrate proteins and provides a physical environment optimized to promote and accelerate protein folding. The chain is Chaperonin GroEL from Rhodococcus hoagii (Corynebacterium equii).